A 703-amino-acid polypeptide reads, in one-letter code: Histone-lysine N-methyltransferase SETDB2 (703 aa).

The MBD domain occupies 178-248 (FTKGNPLQLP…DNFSFNNHVR (71 aa)). Residues 310–384 (KCCNCTDGCL…LCQNRVVQHG (75 aa)) form the Pre-SET domain. Residues cysteine 312, cysteine 314, cysteine 318, cysteine 324, cysteine 326, cysteine 365, cysteine 369, cysteine 371, and cysteine 376 each coordinate Zn(2+). An SET domain is found at 387 to 678 (LRLQVFKTNT…AGTELTWDYS (292 aa)). S-adenosyl-L-methionine is bound at residue 397–399 (KGW). The tract at residues 492 to 588 (TFSPRQARSG…SSSVISGGHP (97 aa)) is disordered. A compositionally biased stretch (basic residues) spans 511–525 (RRPKTKTSMLQKRRR). Positions 550–560 (PEQKSSAGTKI) are enriched in polar residues. The segment covering 571-586 (SGYVSEESSSSVISGG) has biased composition (low complexity). Residues arginine 632 and 635–636 (NH) contribute to the S-adenosyl-L-methionine site. Residues cysteine 638, cysteine 691, cysteine 693, and cysteine 698 each coordinate Zn(2+).

It belongs to the class V-like SAM-binding methyltransferase superfamily.

It is found in the nucleus. It localises to the chromosome. The enzyme catalyses N(6),N(6)-dimethyl-L-lysyl(9)-[histone H3] + S-adenosyl-L-methionine = N(6),N(6),N(6)-trimethyl-L-lysyl(9)-[histone H3] + S-adenosyl-L-homocysteine + H(+). In terms of biological role, histone methyltransferase involved in left-right axis specification in early development and mitosis. Specifically trimethylates 'Lys-9' of histone H3 (H3K9me3). H3K9me3 is a specific tag for epigenetic transcriptional repression that recruits HP1 (CBX1, CBX3 and/or CBX5) proteins to methylated histones. Contributes to H3K9me3 in both the interspersed repetitive elements and centromere-associated repeats. Plays a role in chromosome condensation and segregation during mitosis. This is Histone-lysine N-methyltransferase SETDB2 (setdb2) from Xenopus laevis (African clawed frog).